The following is a 688-amino-acid chain: MGQEKLYIEKELSWLSFNERVLQEAADKSNPLIERMRFLGIYSNNLDEFYKVRFAELKRRIIISEEQGSNSHSRHLLGKIQSRVLKADQEFDGLYNELLLEMARNQIFLINERQLSVNQQNWLRHYFKQYLRQHITPILINPDTDLVQFLKDDYTYLAVEIIRGDTIRYALLEIPSDKVPRFVNLPPEAPRRRKPMILLDNILRYCLDDIFKGFFDYDALNAYSMKMTRDAEYDLVHEMEASLMELMSSSLKQRLTAEPVRFVYQRDMPNALVEVLREKLTISRYDSIVPGGRYHNFKDFINFPNVGKANLVNKPLPRLRHIWFDKAQFRNGFDAIRERDVLLYYPYHTFEHVLELLRQASFDPSVLAIKINIYRVAKDSRIIDSMIHAAHNGKKVTVVVELQARFDEEANIHWAKRLTEAGVHVIFSAPGLKIHAKLFLISRKENGEVVRYAHIGTGNFNEKTARLYTDYSLLTADARITNEVRRVFNFIENPYRPVTFDYLMVSPQNSRRLLYEMVDREIANAQQGLPSGITLKLNNLVDKGLVDRLYAASSSGVPVNLLVRGMCSLIPNLEGISDNIRAISIVDRYLEHDRVYIFENGGDKKVYLSSADWMTRNIDYRIEVATPLLDPRLKQRVLDIIDILFSDTVKARYIDKELSNRYVPRGNRRKVRAQLAIYDYIKSLEQPE.

Residue asparagine 45 coordinates ATP. Positions 375 and 405 each coordinate Mg(2+). Residues 430 to 464 (PGLKIHAKLFLISRKENGEVVRYAHIGTGNFNEKT) enclose the PLD phosphodiesterase domain. Catalysis depends on histidine 435, which acts as the Phosphohistidine intermediate. Residues tyrosine 468, arginine 564, and histidine 592 each coordinate ATP.

The protein belongs to the polyphosphate kinase 1 (PPK1) family. Requires Mg(2+) as cofactor. An intermediate of this reaction is the autophosphorylated ppk in which a phosphate is covalently linked to a histidine residue through a N-P bond.

The catalysed reaction is [phosphate](n) + ATP = [phosphate](n+1) + ADP. Functionally, catalyzes the reversible transfer of the terminal phosphate of ATP to form a long-chain polyphosphate (polyP). The sequence is that of Polyphosphate kinase from Escherichia coli O157:H7.